The chain runs to 457 residues: Serine--tRNA ligase (457 aa).

252–254 (TAE) is an L-serine binding site. ATP is bound by residues 283 to 285 (RKE) and Val-299. L-serine is bound at residue Glu-306. 370–373 (EMVS) serves as a coordination point for ATP. L-serine is bound at residue Thr-406.

The protein belongs to the class-II aminoacyl-tRNA synthetase family. Type-1 seryl-tRNA synthetase subfamily. As to quaternary structure, homodimer. The tRNA molecule binds across the dimer.

The protein resides in the cytoplasm. The catalysed reaction is tRNA(Ser) + L-serine + ATP = L-seryl-tRNA(Ser) + AMP + diphosphate + H(+). The enzyme catalyses tRNA(Sec) + L-serine + ATP = L-seryl-tRNA(Sec) + AMP + diphosphate + H(+). Its pathway is aminoacyl-tRNA biosynthesis; selenocysteinyl-tRNA(Sec) biosynthesis; L-seryl-tRNA(Sec) from L-serine and tRNA(Sec): step 1/1. In terms of biological role, catalyzes the attachment of serine to tRNA(Ser). Is also able to aminoacylate tRNA(Sec) with serine, to form the misacylated tRNA L-seryl-tRNA(Sec), which will be further converted into selenocysteinyl-tRNA(Sec). The polypeptide is Serine--tRNA ligase (Saccharolobus islandicus (strain Y.N.15.51 / Yellowstone #2) (Sulfolobus islandicus)).